The chain runs to 245 residues: Proteolipid protein DM alpha (245 aa).

4 helical membrane-spanning segments follow: residues 19–35, 71–87, 117–133, and 204–220; these read LIATILCFVGVALFCGC, IIYGTASFSFLYGVLLL, FIFLTYALGVTWMGVFA, and LFIATFAGAAATVIALL.

It belongs to the myelin proteolipid protein family. In terms of tissue distribution, highly expressed in white matter in myelinating shark brain.

Its subcellular location is the membrane. This Squalus acanthias (Spiny dogfish) protein is Proteolipid protein DM alpha.